Here is a 503-residue protein sequence, read N- to C-terminus: Surface lipoprotein assembly modifier (503 aa).

Residues 1–34 form the signal peptide; it reads MTITPVYTTFTPTKTPIKFFMAGLTFLIAHISHA. The tract at residues 38-220 is N-terminal domain; it reads RTDNQEPINQ…QYRQALKQRD (183 aa). Residues 136–169 form a TPR repeat; the sequence is ILLGYANALAALDKGNAKKAIDELRRIIAIMPEY. The segment at 221 to 503 is C-terminal probable beta barrel; sequence SWTWQVGMNL…QMFVEFSRIF (283 aa). 14 beta stranded membrane passes run 222–232, 259–270, 275–285, 299–308, 313–322, 334–343, 348–358, 372–382, 387–396, 410–419, 424–434, 454–463, 470–479, and 493–503; these read WTWQVGMNLAK, LSYQLGADKKWS, AYVGANAQIYG, GRLGANLGFA, DLSIETYGEK, IGIRMSVDYR, FQSLNAIDISR, TLYSTSLIYYP, YYLLGADFYD, RGIRTAWGQE, LSSRAQISINK, MQASLSLWHR, ITPRLTISTN, and NQMFVEFSRIF.

It belongs to the Slam family.

Its subcellular location is the cell outer membrane. Its function is as follows. Required for correct export to the cell surface of some cell outer membrane lipoproteins (tested with TpbP) upon heterologous expression in E.coli and probably also in Moraxella. In Moraxella catarrhalis (Branhamella catarrhalis), this protein is Surface lipoprotein assembly modifier.